The following is a 372-amino-acid chain: Alanine racemase (372 aa).

Lysine 33 (proton acceptor; specific for D-alanine) is an active-site residue. At lysine 33 the chain carries N6-(pyridoxal phosphate)lysine. Residue arginine 131 coordinates substrate. Tyrosine 261 functions as the Proton acceptor; specific for L-alanine in the catalytic mechanism. Residue methionine 309 coordinates substrate.

This sequence belongs to the alanine racemase family. Pyridoxal 5'-phosphate is required as a cofactor.

It catalyses the reaction L-alanine = D-alanine. It functions in the pathway amino-acid biosynthesis; D-alanine biosynthesis; D-alanine from L-alanine: step 1/1. In terms of biological role, catalyzes the interconversion of L-alanine and D-alanine. May also act on other amino acids. The chain is Alanine racemase (alr) from Salinispora tropica (strain ATCC BAA-916 / DSM 44818 / JCM 13857 / NBRC 105044 / CNB-440).